A 317-amino-acid polypeptide reads, in one-letter code: Ribosomal protein L11 methyltransferase (317 aa).

Residues threonine 158, glycine 179, aspartate 201, and asparagine 244 each contribute to the S-adenosyl-L-methionine site.

It belongs to the methyltransferase superfamily. PrmA family.

It is found in the cytoplasm. It carries out the reaction L-lysyl-[protein] + 3 S-adenosyl-L-methionine = N(6),N(6),N(6)-trimethyl-L-lysyl-[protein] + 3 S-adenosyl-L-homocysteine + 3 H(+). In terms of biological role, methylates ribosomal protein L11. The protein is Ribosomal protein L11 methyltransferase of Streptococcus pyogenes serotype M28 (strain MGAS6180).